The primary structure comprises 211 residues: Endonuclease III (211 aa).

One can recognise a HhH domain in the interval 111–130 (AHALESLPGVGHKTANVVLN). Residues Cys-190, Cys-197, Cys-200, and Cys-206 each coordinate [4Fe-4S] cluster.

The protein belongs to the Nth/MutY family. [4Fe-4S] cluster serves as cofactor.

The enzyme catalyses 2'-deoxyribonucleotide-(2'-deoxyribose 5'-phosphate)-2'-deoxyribonucleotide-DNA = a 3'-end 2'-deoxyribonucleotide-(2,3-dehydro-2,3-deoxyribose 5'-phosphate)-DNA + a 5'-end 5'-phospho-2'-deoxyribonucleoside-DNA + H(+). Its function is as follows. DNA repair enzyme that has both DNA N-glycosylase activity and AP-lyase activity. The DNA N-glycosylase activity releases various damaged pyrimidines from DNA by cleaving the N-glycosidic bond, leaving an AP (apurinic/apyrimidinic) site. The AP-lyase activity cleaves the phosphodiester bond 3' to the AP site by a beta-elimination, leaving a 3'-terminal unsaturated sugar and a product with a terminal 5'-phosphate. The chain is Endonuclease III from Treponema pallidum (strain Nichols).